A 344-amino-acid chain; its full sequence is Arginine N-succinyltransferase (344 aa).

Leu125 contributes to the succinyl-CoA binding site. Catalysis depends on His229, which acts as the Proton donor.

Belongs to the arginine N-succinyltransferase family.

The catalysed reaction is succinyl-CoA + L-arginine = N(2)-succinyl-L-arginine + CoA + H(+). It functions in the pathway amino-acid degradation; L-arginine degradation via AST pathway; L-glutamate and succinate from L-arginine: step 1/5. Its function is as follows. Catalyzes the transfer of succinyl-CoA to arginine to produce N(2)-succinylarginine. The protein is Arginine N-succinyltransferase of Shigella sonnei (strain Ss046).